A 30-amino-acid polypeptide reads, in one-letter code: Hemocyanin subunit 2 (30 aa).

It belongs to the tyrosinase family. Hemocyanin subfamily. In terms of tissue distribution, hemolymph.

It is found in the secreted. It localises to the extracellular space. Its function is as follows. Hemocyanins are copper-containing oxygen carriers occurring freely dissolved in the hemolymph of many mollusks and arthropods. The polypeptide is Hemocyanin subunit 2 (Homarus americanus (American lobster)).